Consider the following 60-residue polypeptide: Protein AC4 (60 aa).

Belongs to the geminiviridae protein AC4/C4 family.

Pathogenicity determinant. May act as a suppressor of RNA-mediated gene silencing, also known as post-transcriptional gene silencing (PTGS), a mechanism of plant viral defense that limits the accumulation of viral RNAs. The polypeptide is Protein AC4 (Pepper huasteco yellow vein virus (PHYVV)).